The following is a 577-amino-acid chain: Outer spore wall assembly protein SHE10 (577 aa).

A signal peptide spans 1–23; the sequence is MGKLIKLITTLTVLVSLLQYCCE. Coiled coils occupy residues 379–416 and 513–561; these read NETRSTLDELTNAMEKDLSEITDEIEKKVNAIREENVE and ILRS…EEDV. The segment covering 525 to 545 has biased composition (basic and acidic residues); that stretch reads RERKERERKEREKAAAEEFQR. Residues 525–577 are disordered; that stretch reads RERKERERKEREKAAAEEFQRQQELLRQQEEEDEEDVSYTSTSTITTTTTMTL. Low complexity predominate over residues 562-577; sequence SYTSTSTITTTTTMTL.

It belongs to the SHE10 family. As to quaternary structure, component of the mitochondria-localized RNase mitochondrial RNA-processing (RNase MRP) composed of one single RNA encoded by the NME1 gene and at least 31 proteins. Absent in the nucleus-localized RNase MRP (NuMRP).

The protein resides in the mitochondrion. Functionally, involved in spore wall assembly. May be a component of the mitochondrial RNase MRP (MtMRP), a ribonucleoprotein endoribonuclease involved in the cleaving RNA transcripts to generate primers for DNA replication in mitochondria. The polypeptide is Outer spore wall assembly protein SHE10 (Saccharomyces cerevisiae (strain YJM789) (Baker's yeast)).